The chain runs to 604 residues: UvrABC system protein C (604 aa).

The GIY-YIG domain occupies 12–90 (TAPGVYLMRD…IKQHQPRYNL (79 aa)). The region spanning 200–235 (KDLVSGFRQRMKEAAEGLHYEEAARWRDLLKAIDTT) is the UVR domain.

Belongs to the UvrC family. As to quaternary structure, interacts with UvrB in an incision complex.

It is found in the cytoplasm. Functionally, the UvrABC repair system catalyzes the recognition and processing of DNA lesions. UvrC both incises the 5' and 3' sides of the lesion. The N-terminal half is responsible for the 3' incision and the C-terminal half is responsible for the 5' incision. The polypeptide is UvrABC system protein C (Trichlorobacter lovleyi (strain ATCC BAA-1151 / DSM 17278 / SZ) (Geobacter lovleyi)).